Here is a 1070-residue protein sequence, read N- to C-terminus: DNA-directed RNA polymerase subunit beta (1070 aa).

It belongs to the RNA polymerase beta chain family. As to quaternary structure, in plastids the minimal PEP RNA polymerase catalytic core is composed of four subunits: alpha, beta, beta', and beta''. When a (nuclear-encoded) sigma factor is associated with the core the holoenzyme is formed, which can initiate transcription.

The protein localises to the plastid. It localises to the chloroplast. The enzyme catalyses RNA(n) + a ribonucleoside 5'-triphosphate = RNA(n+1) + diphosphate. Its function is as follows. DNA-dependent RNA polymerase catalyzes the transcription of DNA into RNA using the four ribonucleoside triphosphates as substrates. This Liriodendron tulipifera (Tuliptree) protein is DNA-directed RNA polymerase subunit beta.